The sequence spans 354 residues: Guanine nucleotide-binding protein G(i) subunit alpha-3 (354 aa).

G2 carries N-myristoyl glycine lipidation. A lipid anchor (S-palmitoyl cysteine) is attached at C3. The region spanning 32–354 (KEVKLLLLGA…KNNLKECGLY (323 aa)) is the G-alpha domain. Residues 35 to 48 (KLLLLGAGESGKST) are G1 motif. Residues G42, E43, S44, G45, K46, S47, T48, D150, S151, L175, R176, T177, R178, V179, K180, T181, V201, and G203 each contribute to the GTP site. 6 residues coordinate GDP: E43, S44, G45, K46, S47, and T48. S47 contacts Mg(2+). 5 residues coordinate GDP: S151, L175, R176, T177, and R178. Residues 173 to 181 (DVLRTRVKT) form a G2 motif region. R178 bears the ADP-ribosylarginine; by cholera toxin mark. T181 serves as a coordination point for Mg(2+). The tract at residues 196–205 (FKMFDVGGQR) is G3 motif. The residue at position 204 (Q204) is a Deamidated glutamine; by Photorhabdus PAU_02230. Positions 265 to 272 (ILFLNKKD) are G4 motif. GTP is bound by residues N269, K270, D272, L273, C325, A326, and T327. Positions 269, 270, and 272 each coordinate GDP. Positions 324–329 (TCATDT) are G5 motif. Positions 325 and 326 each coordinate GDP. C351 is subject to ADP-ribosylcysteine; by pertussis toxin.

The protein belongs to the G-alpha family. G(i/o/t/z) subfamily. Heterotrimeric G proteins are composed of 3 units; alpha, beta and gamma. The alpha subunit contains the guanine nucleotide binding site. GTP binding causes dissociation of the heterotrimer, liberating the individual subunits so that they can interact with downstream effector proteins. Forms a complex with CCDC88A/GIV and EGFR which leads to enhanced EGFR signaling and triggering of cell migration; ligand stimulation is required for recruitment of GNAI3 to the complex. Interacts (inactive GDP-bound form) with CCDC88A/GIV (via GBA motif); the interaction leads to activation of GNAI3. Interacts (inactive GDP-bound form) with CCDC88C/DAPLE (via GBA motif); the interaction leads to activation of GNAI3. Interacts (inactive GDP-bound form) with NUCB1 (via GBA motif) and NUCB2 (via GBA motif); the interaction leads to activation of GNAI3. Interacts (inactive GDP-bound form) with PLCD4 (via GBA motif); the interaction leads to activation of GNAI3. Interacts with INSR; the interaction is probably mediated by CCDC88A/GIV. Interacts with GPSM1. Interacts (GDP-bound form) with GPSM2 (via GoLoco domains). Does not interact with RGS2. Interacts with RGS8 and RGS10; this strongly enhances the intrinsic GTPase activity. Interacts with RGS16; this strongly enhances the intrinsic GTPase activity. Interacts with RGS12. Interacts (via active GTP- or inactive GDP-bound form) with RGS14. Interacts (via active GTP-bound form) with TRPC5 (via ANK repeats) in a homotetrameric ion channel; the interaction is direct and activates the channel activity. Post-translationally, (Microbial infection) Deamidated at Gln-204 by Photorhabdus asymbiotica toxin PAU_02230, blocking GTP hydrolysis of heterotrimeric GNAQ or GNA11 and G-alphai (GNAI1, GNAI2 or GNAI3) proteins, thereby activating RhoA.

The protein resides in the cytoplasm. It localises to the cell membrane. Its subcellular location is the cytoskeleton. It is found in the microtubule organizing center. The protein localises to the centrosome. In terms of biological role, heterotrimeric guanine nucleotide-binding proteins (G proteins) function as transducers downstream of G protein-coupled receptors (GPCRs) in numerous signaling cascades. The alpha chain contains the guanine nucleotide binding site and alternates between an active, GTP-bound state and an inactive, GDP-bound state. Signaling by an activated GPCR promotes GDP release and GTP binding. The alpha subunit has a low GTPase activity that converts bound GTP to GDP, thereby terminating the signal. Both GDP release and GTP hydrolysis are modulated by numerous regulatory proteins. Signaling is mediated via effector proteins, such as adenylate cyclase. Inhibits adenylate cyclase activity, leading to decreased intracellular cAMP levels. Stimulates the activity of receptor-regulated K(+) channels. The active GTP-bound form prevents the association of RGS14 with centrosomes and is required for the translocation of RGS14 from the cytoplasm to the plasma membrane. May play a role in cell division. The active GTP-bound form activates the calcium permeant TRPC5 ion channels. The protein is Guanine nucleotide-binding protein G(i) subunit alpha-3 (GNAI3) of Homo sapiens (Human).